We begin with the raw amino-acid sequence, 433 residues long: ATP-dependent protease ATPase subunit HslU (433 aa).

Residues V18, 60 to 65, D246, E311, and R383 contribute to the ATP site; that span reads GVGKTE.

Belongs to the ClpX chaperone family. HslU subfamily. In terms of assembly, a double ring-shaped homohexamer of HslV is capped on each side by a ring-shaped HslU homohexamer. The assembly of the HslU/HslV complex is dependent on binding of ATP.

The protein resides in the cytoplasm. Functionally, ATPase subunit of a proteasome-like degradation complex; this subunit has chaperone activity. The binding of ATP and its subsequent hydrolysis by HslU are essential for unfolding of protein substrates subsequently hydrolyzed by HslV. HslU recognizes the N-terminal part of its protein substrates and unfolds these before they are guided to HslV for hydrolysis. The sequence is that of ATP-dependent protease ATPase subunit HslU from Rhodopseudomonas palustris (strain TIE-1).